The chain runs to 276 residues: Undecaprenyl-diphosphatase 1 (276 aa).

A run of 7 helical transmembrane segments spans residues 4–24, 45–62, 83–103, 108–128, 187–207, 217–237, and 252–272; these read ILIC…FLPV, KTFD…VCWE, FTLN…LFEK, VLFS…IILW, VATE…TLYE, VDSL…AFVC, and VFAW…YSGW.

The protein belongs to the UppP family.

The protein resides in the cell inner membrane. The catalysed reaction is di-trans,octa-cis-undecaprenyl diphosphate + H2O = di-trans,octa-cis-undecaprenyl phosphate + phosphate + H(+). Its function is as follows. Catalyzes the dephosphorylation of undecaprenyl diphosphate (UPP). Confers resistance to bacitracin. The chain is Undecaprenyl-diphosphatase 1 from Burkholderia ambifaria (strain ATCC BAA-244 / DSM 16087 / CCUG 44356 / LMG 19182 / AMMD) (Burkholderia cepacia (strain AMMD)).